The following is a 658-amino-acid chain: Carnitine O-palmitoyltransferase 2, mitochondrial (658 aa).

The transit peptide at 1 to 25 directs the protein to the mitochondrion; the sequence is MVARLLLRSWSRGLAVGPGAPCRPL. Over 26–178 the chain is Mitochondrial matrix; sequence STGFEPSQYL…DLLEPEVFHL (153 aa). K69 carries the N6-succinyllysine modification. At K79 the chain carries N6-acetyllysine. K85 is modified (N6-succinyllysine). Positions 179-208 form an intramembrane region, note=Mitochondrial inner membrane; that stretch reads NPAKSDTDTFKRFIRFVPSFLSWYGAYLVN. Residues 209–658 are Mitochondrial matrix-facing; that stretch reads AYPLDMSQYY…DALEGKMIKT (450 aa). The residue at position 239 (K239) is an N6-acetyllysine; alternate. At K239 the chain carries N6-succinyllysine; alternate. H372 serves as the catalytic Proton acceptor. K418 bears the N6-acetyllysine; alternate mark. Position 418 is an N6-succinyllysine; alternate (K418). Residues K424 and K439 each carry the N6-succinyllysine modification. 452–464 provides a ligand contact to CoA; it reads GREFLKKQKLSPD. Residues Y486, S488, and T499 each coordinate (R)-carnitine. K510 carries the post-translational modification N6-acetyllysine; alternate. Position 510 is an N6-succinyllysine; alternate (K510).

The protein belongs to the carnitine/choline acetyltransferase family.

The protein resides in the mitochondrion inner membrane. The enzyme catalyses (R)-carnitine + hexadecanoyl-CoA = O-hexadecanoyl-(R)-carnitine + CoA. The catalysed reaction is octanoyl-CoA + (R)-carnitine = O-octanoyl-(R)-carnitine + CoA. It catalyses the reaction decanoyl-CoA + (R)-carnitine = O-decanoyl-(R)-carnitine + CoA. It carries out the reaction dodecanoyl-CoA + (R)-carnitine = O-dodecanoyl-R-carnitine + CoA. The enzyme catalyses tetradecanoyl-CoA + (R)-carnitine = O-tetradecanoyl-(R)-carnitine + CoA. The catalysed reaction is (R)-carnitine + octadecanoyl-CoA = O-octadecanoyl-(R)-carnitine + CoA. It catalyses the reaction eicosanoyl-CoA + (R)-carnitine = O-eicosanoyl-(R)-carnitine + CoA. It carries out the reaction (9Z)-tetradecenoyl-CoA + (R)-carnitine = O-(9Z)-tetradecenoyl-(R)-carnitine + CoA. The enzyme catalyses (5Z)-tetradecenoyl-CoA + (R)-carnitine = O-(5Z)-tetradecenoyl-(R)-carnitine + CoA. The catalysed reaction is (R)-carnitine + (9Z)-octadecenoyl-CoA = O-(9Z)-octadecenoyl-(R)-carnitine + CoA. It catalyses the reaction 4,8-dimethylnonanoyl-CoA + (R)-carnitine = O-4,8-dimethylnonanoyl-(R)-carnitine + CoA. The protein operates within lipid metabolism; fatty acid beta-oxidation. Functionally, involved in the intramitochondrial synthesis of acylcarnitines from accumulated acyl-CoA metabolites. Reconverts acylcarnitines back into the respective acyl-CoA esters that can then undergo beta-oxidation, an essential step for the mitochondrial uptake of long-chain fatty acids and their subsequent beta-oxidation in the mitochondrion. Active with medium (C8-C12) and long-chain (C14-C18) acyl-CoA esters. The protein is Carnitine O-palmitoyltransferase 2, mitochondrial (CPT2) of Bos taurus (Bovine).